A 115-amino-acid chain; its full sequence is U2-ctenitoxin-Pn1b (115 aa).

The signal sequence occupies residues 1–17; sequence MKVAVIILSILVLAAAS. Residues 18-61 constitute a propeptide that is removed on maturation; sequence ESIEEYREDFSRPNAMERSANDWIPTAPSAVERSADFAVEELER. 5 disulfides stabilise this stretch: Cys64-Cys78, Cys71-Cys84, Cys75-Cys113, Cys77-Cys98, and Cys86-Cys96. Lys115 is a propeptide.

It belongs to the neurotoxin 03 (Tx2) family. 04 subfamily. As to expression, expressed by the venom gland.

The protein resides in the secreted. Functionally, blocks voltage-gated sodium channels (Nav). The protein is U2-ctenitoxin-Pn1b of Phoneutria nigriventer (Brazilian armed spider).